Reading from the N-terminus, the 436-residue chain is F-box/LRR-repeat protein At2g40920 (436 aa).

Residues 48–98 (EYLLQNFDLDHVMEILMRFPLTSLTRFKCVSKQWSSLISSRYFCNLLYTTV) enclose the F-box domain. LRR repeat units follow at residues 276–301 (NCVV…IHLD) and 393–416 (YYNL…WFDK).

This chain is F-box/LRR-repeat protein At2g40920, found in Arabidopsis thaliana (Mouse-ear cress).